The sequence spans 1347 residues: MDLLSGTYIFAVLLACVVFHSGAQEKNYTIREEMPENVLIGDLLKDLNLSLIPNKSLTTAMQFKLVYKTGDVPLIRIEEDTGEIFTTGARIDREKLCAGIPRDEHCFYEVEVAILPDEIFRLVKIRFLIEDINDNAPLFPATVINISIPENSAINSKYTLPAAVDPDVGTNGVQNYELIKSQNIFGLDVIETPEGDKMPQLIVQKELDREEKDTYVMKVKVEDGGFPQRSSTAILQVSVTDTNDNHPVFKETEIEVSIPENAPVGTSVTQLHATDADIGENAKIHFSFSNLVSNIARRLFHLNATTGLITIKEPLDREETPNHKLLVLASDGGLMPARAMVLVNVTDVNDNVPSIDIRYIVNPVNDTVVLSENIPLNTKIALITVTDKDADHNGRVTCFTDHEIPFRLRPVFSNQFLLETAAYLDYESTKEYAIKLLAADAGKPPLNQSAMLFIKVKDENDNAPVFTQSFVTVSIPENNSPGIQLTKVSATDADSGPNAEINYLLGPDAPPEFSLDRRTGMLTVVKKLDREKEDKYLFTILAKDNGVPPLTSNVTVFVSIIDQNDNSPVFTHNEYNFYVPENLPRHGTVGLITVTDPDYGDNSAVTLSILDENDDFTIDSQTGVIRPNISFDREKQESYTFYVKAEDGGRVSRSSSAKVTINVVDVNDNKPVFIVPPSNYSYELVLPSTNPGTVVFQVMAVDNDTGMNAEVRYSIVGGNTRDLFAIDQETGNITLMEKCDVTDLGLHRVLVKANDLGQPDSLFSVVIVNLFVNESVTNATLINELVRKSTEAPVTPNTEIADVSSPTSDYVKILVAAVAGTITVVVVIFITAVVRCRQAPHLKAAQKNKQNSEWATPNPENRQMIMMKKRKKKKKHSPKNLLLNFVTIEETKADDVDSDGNRVTLDLPIDLEEQTMGKYNWVTTPTTFKPDSPDLARHYKSASPQPAFQIQPETPLNSKHHIIQELPLDNTFVACDSISKCSSSSSDPYSVSDCGYPVTTFEVPVSVHTRPPMKEVVRSCTPMKESTTMEIWIHPQPQRKSEGKVAGKSQRRVTFHLPEGSQESSSDGGLGDHDAGSLTSTSHGLPLGYPQEEYFDRATPSNRTEGDGNSDPESTFIPGLKKAAEITVQPTVEEASDNCTQECLIYGHSDACWMPASLDHSSSSQAQASALCHSPPLSQASTQHHSPPVTQTIALCHSPPVTQTIALCHSPPPIQVSALHHSPPLVQATALHHSPPSAQASALCYSPPLAQAAAISHSSPLPQVIALHRSQAQSSVSLQQGWVQGADGLCSVDQGVQGSATSQFYTMSERLHPSDDSIKVIPLTTFTPRQQARPSRGDSPVMEEHPL.

An N-terminal signal peptide occupies residues 1-23 (MDLLSGTYIFAVLLACVVFHSGA). At 24–812 (QEKNYTIREE…VSSPTSDYVK (789 aa)) the chain is on the extracellular side. Cadherin domains are found at residues 26–139 (KNYT…APLF), 140–249 (PATV…HPVF), 250–355 (KETE…VPSI), 362–466 (NPVN…APVF), 467–570 (TQSF…SPVF), 571–673 (THNE…KPVF), and 677–795 (PSNY…APVT). N-linked (GlcNAc...) asparagine glycosylation is found at N27, N48, and N54. N-linked (GlcNAc...) asparagine glycosylation occurs at N344. An N-linked (GlcNAc...) asparagine glycan is attached at N553. Residue N773 is glycosylated (N-linked (GlcNAc...) asparagine). The chain crosses the membrane as a helical span at residues 813–833 (ILVAAVAGTITVVVVIFITAV). Over 834-1347 (VRCRQAPHLK…DSPVMEEHPL (514 aa)) the chain is Cytoplasmic. Disordered stretches follow at residues 1057-1091 (LPEG…GYPQ), 1097-1116 (RATP…ESTF), and 1325-1347 (TFTP…EHPL).

It localises to the cell membrane. In terms of biological role, potential calcium-dependent cell-adhesion protein. The sequence is that of Protocadherin-11 X-linked (PCDH11X) from Pan troglodytes (Chimpanzee).